A 250-amino-acid chain; its full sequence is ATP synthase subunit a (250 aa).

The next 5 helical transmembrane spans lie at 27–47 (TDTVLSTAIAALIVLALAFYL), 83–103 (IAPFVLPLAVTIFVFILISNW), 129–149 (INYVLALALFVFVCYHAAGIW), 191–211 (IFAGSILVALIALFPPYIMWA), and 219–239 (FDLFVGAIQAFIFALLTILYF).

This sequence belongs to the ATPase A chain family. F-type ATPases have 2 components, CF(1) - the catalytic core - and CF(0) - the membrane proton channel. CF(1) has five subunits: alpha(3), beta(3), gamma(1), delta(1), epsilon(1). CF(0) has three main subunits: a(1), b(2) and c(9-12). The alpha and beta chains form an alternating ring which encloses part of the gamma chain. CF(1) is attached to CF(0) by a central stalk formed by the gamma and epsilon chains, while a peripheral stalk is formed by the delta and b chains.

The protein resides in the cell membrane. Key component of the proton channel; it plays a direct role in the translocation of protons across the membrane. The polypeptide is ATP synthase subunit a (Mycobacterium ulcerans (strain Agy99)).